A 230-amino-acid chain; its full sequence is Large ribosomal subunit protein uL1 (230 aa).

Belongs to the universal ribosomal protein uL1 family. Part of the 50S ribosomal subunit.

Binds directly to 23S rRNA. The L1 stalk is quite mobile in the ribosome, and is involved in E site tRNA release. Its function is as follows. Protein L1 is also a translational repressor protein, it controls the translation of the L11 operon by binding to its mRNA. The polypeptide is Large ribosomal subunit protein uL1 (Rhodopseudomonas palustris (strain BisA53)).